The following is a 132-amino-acid chain: Agouti-signaling protein (132 aa).

The first 22 residues, 1–22, serve as a signal peptide directing secretion; the sequence is MDVTRLLLATLLVFLCFFTAYS. Residue asparagine 39 is glycosylated (N-linked (GlcNAc...) asparagine). The disordered stretch occupies residues 62–88; sequence ISRKEAEKKRSSKKEASMKKVARPRTP. Positions 63 to 79 are enriched in basic and acidic residues; the sequence is SRKEAEKKRSSKKEASM. Disulfide bonds link cysteine 93–cysteine 108, cysteine 100–cysteine 114, cysteine 107–cysteine 125, cysteine 111–cysteine 132, and cysteine 116–cysteine 123. Positions 93–132 constitute an Agouti domain; the sequence is CVATRDSCKPPAPACCDPCASCQCRFFRSACSCRVLSLNC.

It is found in the secreted. Its function is as follows. Involved in the regulation of melanogenesis. The binding of ASP to MC1R precludes alpha-MSH initiated signaling and thus blocks production of cAMP, leading to a down-regulation of eumelanogenesis (brown/black pigment) and thus increasing synthesis of pheomelanin (yellow/red pigment). This Chlorocebus aethiops (Green monkey) protein is Agouti-signaling protein (ASIP).